Reading from the N-terminus, the 967-residue chain is Isoleucine--tRNA ligase (967 aa).

A 'HIGH' region motif is present at residues 64–74 (PYANGNIHIGH). Glutamate 600 contributes to the L-isoleucyl-5'-AMP binding site. The 'KMSKS' region signature appears at 641–645 (KQSKS). Lysine 644 lines the ATP pocket.

It belongs to the class-I aminoacyl-tRNA synthetase family. IleS type 1 subfamily. In terms of assembly, monomer.

The protein resides in the cytoplasm. It carries out the reaction tRNA(Ile) + L-isoleucine + ATP = L-isoleucyl-tRNA(Ile) + AMP + diphosphate. Functionally, catalyzes the attachment of isoleucine to tRNA(Ile). As IleRS can inadvertently accommodate and process structurally similar amino acids such as valine, to avoid such errors it has two additional distinct tRNA(Ile)-dependent editing activities. One activity is designated as 'pretransfer' editing and involves the hydrolysis of activated Val-AMP. The other activity is designated 'posttransfer' editing and involves deacylation of mischarged Val-tRNA(Ile). The protein is Isoleucine--tRNA ligase of Agrobacterium fabrum (strain C58 / ATCC 33970) (Agrobacterium tumefaciens (strain C58)).